The primary structure comprises 61 residues: Progonadoliberin-1 (61 aa).

A Pyrrolidone carboxylic acid modification is found at Gln1. Glycine amide is present on Gly10.

It belongs to the GnRH family.

It is found in the secreted. Its function is as follows. Stimulates the secretion of gonadotropins; it stimulates the secretion of both luteinizing and follicle-stimulating hormones. This is Progonadoliberin-1 (GNRH1) from Ovis aries (Sheep).